A 372-amino-acid chain; its full sequence is N-methyl-L-tryptophan oxidase (372 aa).

Position 4-34 (4-34 (DLIIIGSGSVGAAAGYYATRAGLNVLMTDAH)) interacts with FAD. Position 308 is an S-8alpha-FAD cysteine (C308).

It belongs to the MSOX/MTOX family. MTOX subfamily. As to quaternary structure, monomer. FAD is required as a cofactor.

The catalysed reaction is N(alpha)-methyl-L-tryptophan + O2 + H2O = L-tryptophan + formaldehyde + H2O2. Catalyzes the oxidative demethylation of N-methyl-L-tryptophan. The sequence is that of N-methyl-L-tryptophan oxidase from Shigella dysenteriae serotype 1 (strain Sd197).